The following is a 158-amino-acid chain: U-limacoditoxin(8)-Dv66 (158 aa).

Positions 1–24 (MALRAPWIALCCVLAVLFVVPAAT) are cleaved as a signal peptide. Positions 25 to 32 (RDEERQKR) are excised as a propeptide. A run of 2 repeats spans residues 33 to 78 (GVDF…RQKR) and 79 to 124 (GVDF…RQKR). A 3 X 46 AA tandem repeats region spans residues 33 to 158 (GVDFGLQRGF…AQDPHGPGRK (126 aa)). Pro-63 is subject to Proline amide. The propeptide occupies 64-78 (GRKRRDAYEMERQKR). The segment at 101 to 120 (ARAQDPHGPGRKRRDAYEME) is disordered. Pro-109 carries the proline amide modification. The propeptide occupies 110–124 (GRKRRDAYEMERQKR). The stretch at 125–158 (GVDFGLQRGFSGSELAKLKLALARAQDPHGPGRK) is one 3; half-length repeat. Pro-155 is subject to Proline amide.

It belongs to the diuretic hormone class 2 family. Expressed by the venom secretory cell of the spine. The spine is a cuticular structure containing a single large nucleated venom-secreting cell at its base. It is an independent unit capable of producing, storing and injecting venom. On the back of D.vulnerans caterpillars, spines are grouped together by 50 to 100 to form scoli, of which there are eight in D.vulnerans.

Its subcellular location is the secreted. Its function is as follows. Probable toxin. Does not show insecticidal, antimicrobial and antiparasitic activities. Does not induce increase in intracellular calcium in mouse DRG neurons, suggesting that it does not induce pain. This is U-limacoditoxin(8)-Dv66 from Doratifera vulnerans (Mottled cup moth).